The primary structure comprises 167 residues: MADDATRKAVSEIPLLKTNSGPRDKELWVQRLREEYLALIKYVENNKTADNDWFRLESNKEGTRWFGKCWYIHDLLKYEFDMEFDIPVTYPSTAPEIAIPELDGKTAKMYRGGKICLTDHFKPLWARNVPKFGLAHLMALGLGPWLAVEIPDLISKGLITHREQQGS.

Cysteine 116 (glycyl thioester intermediate) is an active-site residue.

Belongs to the ubiquitin-conjugating enzyme family. UFC1 subfamily. In terms of assembly, interacts with UBA5 (via C-terminus). Interacts with UFL1. Interacts with UFM1.

E2-like enzyme which specifically catalyzes the second step in ufmylation. Accepts the ubiquitin-like modifier UFM1 from the E1 enzyme UBA5 and forms an intermediate with UFM1 via a thioester linkage. Ufmylation is involved in various processes, such as ribosome recycling, response to DNA damage, interferon response or reticulophagy (also called ER-phagy). This Salmo salar (Atlantic salmon) protein is Ubiquitin-fold modifier-conjugating enzyme 1.